We begin with the raw amino-acid sequence, 465 residues long: Cysteine--tRNA ligase (465 aa).

Cysteine 27 contacts Zn(2+). Positions 29–39 (PTVYDDAHLGH) match the 'HIGH' region motif. Zn(2+) contacts are provided by cysteine 207, histidine 237, and glutamate 241. The 'KMSKS' region signature appears at 269–273 (KMSKS). Lysine 272 is a binding site for ATP.

It belongs to the class-I aminoacyl-tRNA synthetase family. In terms of assembly, monomer. Requires Zn(2+) as cofactor.

It localises to the cytoplasm. The enzyme catalyses tRNA(Cys) + L-cysteine + ATP = L-cysteinyl-tRNA(Cys) + AMP + diphosphate. The chain is Cysteine--tRNA ligase from Helicobacter pylori (strain HPAG1).